Here is a 274-residue protein sequence, read N- to C-terminus: Uridine-5'-phosphate dioxygenase (274 aa).

Positions 103, 105, and 246 each coordinate Fe cation.

Requires Fe(2+) as cofactor.

The catalysed reaction is UMP + 2-oxoglutarate + O2 = uridine-5'-aldehyde + succinate + phosphate + CO2. Its pathway is antibiotic biosynthesis. With respect to regulation, inhibited by several divalent cations, including Zn(2+). Functionally, dioxygenase involved in the biosynthesis of the lipopeptidyl nucleoside antibiotic A-90289. Catalyzes the dephosphorylation and oxidation of UMP to generate uridine-5'-aldehyde, the first intermediate in the biosynthesis of A-90289. The chain is Uridine-5'-phosphate dioxygenase from Streptomyces sp.